A 227-amino-acid polypeptide reads, in one-letter code: Large ribosomal subunit protein uL3 (227 aa).

A disordered region spans residues 146-167; sequence RGPMAHGSKFHRHQGSNGACSS.

Belongs to the universal ribosomal protein uL3 family. As to quaternary structure, part of the 50S ribosomal subunit. Forms a cluster with proteins L14 and L19.

Functionally, one of the primary rRNA binding proteins, it binds directly near the 3'-end of the 23S rRNA, where it nucleates assembly of the 50S subunit. The chain is Large ribosomal subunit protein uL3 from Agathobacter rectalis (strain ATCC 33656 / DSM 3377 / JCM 17463 / KCTC 5835 / VPI 0990) (Eubacterium rectale).